A 512-amino-acid polypeptide reads, in one-letter code: Maturase K (512 aa).

It belongs to the intron maturase 2 family. MatK subfamily.

The protein localises to the plastid. It is found in the chloroplast. Its function is as follows. Usually encoded in the trnK tRNA gene intron. Probably assists in splicing its own and other chloroplast group II introns. The sequence is that of Maturase K from Amorphophallus paeoniifolius (Whitespot giant arum).